Reading from the N-terminus, the 299-residue chain is Acetylglutamate kinase (299 aa).

Substrate contacts are provided by residues 70 to 71, R92, and N186; that span reads GG.

Belongs to the acetylglutamate kinase family. ArgB subfamily.

The protein resides in the cytoplasm. It catalyses the reaction N-acetyl-L-glutamate + ATP = N-acetyl-L-glutamyl 5-phosphate + ADP. It participates in amino-acid biosynthesis; L-arginine biosynthesis; N(2)-acetyl-L-ornithine from L-glutamate: step 2/4. Its function is as follows. Catalyzes the ATP-dependent phosphorylation of N-acetyl-L-glutamate. This Thermoanaerobacter sp. (strain X514) protein is Acetylglutamate kinase.